Reading from the N-terminus, the 223-residue chain is Putative N-acetylmannosamine-6-phosphate 2-epimerase (223 aa).

It belongs to the NanE family.

It catalyses the reaction an N-acyl-D-glucosamine 6-phosphate = an N-acyl-D-mannosamine 6-phosphate. It functions in the pathway amino-sugar metabolism; N-acetylneuraminate degradation; D-fructose 6-phosphate from N-acetylneuraminate: step 3/5. Functionally, converts N-acetylmannosamine-6-phosphate (ManNAc-6-P) to N-acetylglucosamine-6-phosphate (GlcNAc-6-P). The polypeptide is Putative N-acetylmannosamine-6-phosphate 2-epimerase (Clostridioides difficile (strain 630) (Peptoclostridium difficile)).